A 313-amino-acid chain; its full sequence is Acetyl-coenzyme A carboxylase carboxyl transferase subunit beta, chloroplastic (313 aa).

Residues 47 to 313 enclose the CoA carboxyltransferase N-terminal domain; the sequence is LWTRCDNCEN…SAPCRRSNNS (267 aa). Residues C51, C54, C70, and C73 each coordinate Zn(2+). The segment at 51 to 73 adopts a C4-type zinc-finger fold; the sequence is CDNCENMLYIRFLRQNKRICEEC.

The protein belongs to the AccD/PCCB family. Acetyl-CoA carboxylase is a heterohexamer composed of biotin carboxyl carrier protein, biotin carboxylase and 2 subunits each of ACCase subunit alpha and ACCase plastid-coded subunit beta (accD). Zn(2+) serves as cofactor.

The protein localises to the plastid. It is found in the chloroplast stroma. It carries out the reaction N(6)-carboxybiotinyl-L-lysyl-[protein] + acetyl-CoA = N(6)-biotinyl-L-lysyl-[protein] + malonyl-CoA. It functions in the pathway lipid metabolism; malonyl-CoA biosynthesis; malonyl-CoA from acetyl-CoA: step 1/1. In terms of biological role, component of the acetyl coenzyme A carboxylase (ACC) complex. Biotin carboxylase (BC) catalyzes the carboxylation of biotin on its carrier protein (BCCP) and then the CO(2) group is transferred by the transcarboxylase to acetyl-CoA to form malonyl-CoA. The chain is Acetyl-coenzyme A carboxylase carboxyl transferase subunit beta, chloroplastic from Anthoceros angustus (Hornwort).